A 163-amino-acid polypeptide reads, in one-letter code: Single-stranded DNA-binding protein 1 (163 aa).

An SSB domain is found at 1–104; sequence MINNVVLVGR…VVAESFQLLE (104 aa). A disordered region spans residues 106–163; the sequence is RATREGGSPNSYNNGGYNNAPSNNSYSASSQQTPNFSRDESPFGNSNPMDISDDDLPF. Low complexity predominate over residues 111-135; the sequence is GGSPNSYNNGGYNNAPSNNSYSASS. Positions 158–163 match the Important for interaction with partner proteins motif; it reads DDDLPF.

As to quaternary structure, homotetramer.

Its function is as follows. Plays an important role in DNA replication, recombination and repair. Binds to ssDNA and to an array of partner proteins to recruit them to their sites of action during DNA metabolism. The sequence is that of Single-stranded DNA-binding protein 1 (ssb1) from Streptococcus agalactiae serotype III (strain NEM316).